Reading from the N-terminus, the 786-residue chain is Diamine oxidase [copper-containing] 1, peroxisomal (786 aa).

419–430 contributes to the substrate binding site; it reads AFDAGEDGLGKN. Residue aspartate 421 is the Proton acceptor of the active site. The cysteines at positions 440 and 466 are disulfide-linked. Residue 502-507 coordinates substrate; it reads VANYEY. Tyrosine 505 functions as the Schiff-base intermediate with substrate; via topaquinone in the catalytic mechanism. Tyrosine 505 bears the 2',4',5'-topaquinone mark. Residues histidine 555 and histidine 557 each coordinate Cu cation. The Mn(2+) site is built by aspartate 710 and isoleucine 711. Histidine 721 is a binding site for Cu cation.

This sequence belongs to the copper/topaquinone oxidase family. Homodimer. Cu cation is required as a cofactor. Requires Zn(2+) as cofactor. L-topaquinone serves as cofactor. In terms of processing, topaquinone (TPQ) is generated by copper-dependent autoxidation of a specific tyrosyl residue. As to expression, mainly expressed in roots, and, to a lower extent, in leaves and stems.

It is found in the peroxisome. The enzyme catalyses a primary methyl amine + O2 + H2O = an aldehyde + H2O2 + NH4(+). It carries out the reaction N-methylputrescine + O2 + H2O = 4-methylaminobutanal + H2O2 + NH4(+). It participates in alkaloid biosynthesis; nicotine biosynthesis. It functions in the pathway amine and polyamine degradation; putrescine degradation. Its function is as follows. Involved in putrescine catabolism in peroxisomes. May also be involved in the biosynthesis of pyridine alkaloid natural products, leading mainly to the production of anabasine, anatabine, nicotine and nornicotine, effective deterrents against herbivores with antiparasitic and pesticide properties (neurotoxins); nornicotine serves as the precursor in the synthesis of the carcinogen compound N'-nitrosonornicotine (NNN). Oxidizes preferentially non-N-methylated amines. This chain is Diamine oxidase [copper-containing] 1, peroxisomal, found in Nicotiana tabacum (Common tobacco).